The sequence spans 254 residues: Type III pantothenate kinase (254 aa).

6–13 contacts ATP; it reads DVGNTNIV. 107-110 is a binding site for substrate; sequence GADR. Aspartate 109 serves as the catalytic Proton acceptor. Residue aspartate 129 coordinates K(+). Threonine 132 serves as a coordination point for ATP. A substrate-binding site is contributed by threonine 184.

This sequence belongs to the type III pantothenate kinase family. In terms of assembly, homodimer. It depends on NH4(+) as a cofactor. K(+) serves as cofactor.

Its subcellular location is the cytoplasm. The enzyme catalyses (R)-pantothenate + ATP = (R)-4'-phosphopantothenate + ADP + H(+). It functions in the pathway cofactor biosynthesis; coenzyme A biosynthesis; CoA from (R)-pantothenate: step 1/5. Functionally, catalyzes the phosphorylation of pantothenate (Pan), the first step in CoA biosynthesis. The sequence is that of Type III pantothenate kinase from Exiguobacterium sp. (strain ATCC BAA-1283 / AT1b).